The following is a 662-amino-acid chain: Zinc finger protein 17 (662 aa).

One can recognise a KRAB domain in the interval 8–101 (MVFEDVAIHF…LLKDILHLAE (94 aa)). 16 consecutive C2H2-type zinc fingers follow at residues 190-212 (YSCT…QKIH), 218-240 (YECS…QRNH), 246-268 (YKCS…QKIH), 274-296 (YECS…QRIH), 302-324 (YVCS…QKIH), 358-380 (FYCC…QRVH), 386-408 (YECN…QKVH), 414-436 (YECS…QRVH), 442-464 (YECN…QRVH), 470-492 (YECS…QRVH), 498-520 (FECS…QRIH), 526-548 (YECS…RRNH), 554-576 (FECT…QKVH), 582-604 (YKCS…ERVH), 610-632 (YECS…RRIH), and 638-660 (YQCS…QKVH).

This sequence belongs to the krueppel C2H2-type zinc-finger protein family.

It localises to the nucleus. Its function is as follows. May be involved in transcriptional regulation. This is Zinc finger protein 17 (ZNF17) from Homo sapiens (Human).